Here is an 85-residue protein sequence, read N- to C-terminus: Elicitor peptide 7 (85 aa).

A propeptide spanning residues 1-62 (MEGEGRREDG…TEVVNIPRSV (62 aa)) is cleaved from the precursor. The tract at residues 66-85 (NVAARKGKQQTSSGKGGGTN) is disordered.

This sequence belongs to the brassicaceae elicitor peptide family.

Functionally, elicitor of plant defense. This chain is Elicitor peptide 7 (PEP7), found in Arabidopsis thaliana (Mouse-ear cress).